The chain runs to 411 residues: Stearoyl-[acyl-carrier-protein] 9-desaturase 2, chloroplastic (411 aa).

A chloroplast-targeting transit peptide spans M1–V44. Fe cation-binding residues include E148, E186, H189, E239, E272, and H275.

This sequence belongs to the fatty acid desaturase type 2 family. Homodimer. Fe(2+) is required as a cofactor. In terms of tissue distribution, preferentially expressed in roots and flowers.

It is found in the plastid. The protein localises to the chloroplast. The catalysed reaction is octadecanoyl-[ACP] + 2 reduced [2Fe-2S]-[ferredoxin] + O2 + 2 H(+) = (9Z)-octadecenoyl-[ACP] + 2 oxidized [2Fe-2S]-[ferredoxin] + 2 H2O. It functions in the pathway lipid metabolism; fatty acid metabolism. Its function is as follows. Converts stearoyl-ACP to oleoyl-ACP by introduction of a cis double bond between carbons 9 and 10 of the acyl chain. Exhibits delta-9 palmitoyl-[acyl-carrier-protein] desaturase (PAD) activity. Involved in omega-7 monounsaturated fatty acid biosynthesis, especially in the endosperm oil. The sequence is that of Stearoyl-[acyl-carrier-protein] 9-desaturase 2, chloroplastic (S-ACP-DES2) from Arabidopsis thaliana (Mouse-ear cress).